Consider the following 173-residue polypeptide: NADH-ubiquinone oxidoreductase chain 6 (173 aa).

Transmembrane regions (helical) follow at residues 1 to 21 (MTYF…AVAS), 27 to 47 (YGVV…LSLG), 48 to 68 (VSFV…VVFV), 91 to 111 (GVSF…IGCL), and 139 to 159 (CGVG…FVVL).

It belongs to the complex I subunit 6 family.

It localises to the mitochondrion membrane. It catalyses the reaction a ubiquinone + NADH + 5 H(+)(in) = a ubiquinol + NAD(+) + 4 H(+)(out). Its function is as follows. Core subunit of the mitochondrial membrane respiratory chain NADH dehydrogenase (Complex I) that is believed to belong to the minimal assembly required for catalysis. Complex I functions in the transfer of electrons from NADH to the respiratory chain. The immediate electron acceptor for the enzyme is believed to be ubiquinone. The chain is NADH-ubiquinone oxidoreductase chain 6 (MT-ND6) from Fratercula cirrhata (Tufted puffin).